We begin with the raw amino-acid sequence, 255 residues long: Small ribosomal subunit protein uS2 (255 aa).

A disordered region spans residues 226–255 (QGVSNEEVAAEQNIDLDEKEKSEETEATEE).

The protein belongs to the universal ribosomal protein uS2 family.

This Staphylococcus aureus (strain Mu3 / ATCC 700698) protein is Small ribosomal subunit protein uS2.